We begin with the raw amino-acid sequence, 353 residues long: 4-hydroxy-2-oxovalerate aldolase 2 (353 aa).

Positions 14–266 constitute a Pyruvate carboxyltransferase domain; the sequence is VRMTDTSLRD…KTGIDFFDIA (253 aa). 22 to 23 contacts substrate; that stretch reads RD. Asp-23 contributes to the Mn(2+) binding site. The Proton acceptor role is filled by His-26. Substrate-binding residues include Ser-176 and His-205. The Mn(2+) site is built by His-205 and His-207. Tyr-296 contributes to the substrate binding site.

It belongs to the 4-hydroxy-2-oxovalerate aldolase family.

It catalyses the reaction (S)-4-hydroxy-2-oxopentanoate = acetaldehyde + pyruvate. The sequence is that of 4-hydroxy-2-oxovalerate aldolase 2 from Mycobacterium sp. (strain JLS).